Reading from the N-terminus, the 935-residue chain is MASVLEKVLRVGEGRVLRRLEAYAKAVSALEDDFSALADDELMHETVELRERYSKGESLDDLLPEAFAAVREASKRTLGMRHFDVQIMGGAALHLGNIAEMKTGEGKTLVATTAAYLNAITSRGVHVITVNDYLASYQSELMGRVFRALGMTTGVILAGQTPEERREQYAADITYGTNNEFGFDYLRDNMAWQASDMVQRGHYFAIVDEVDSILIDEARTPLIISGPSSGEANRWFNEFANLAKRLEPQVDYEVDEKKRTVGVLESGIEKVEDYLGIDNLYESANTPLISFLNNAIKANALFKRDKDYVVMNGEVLIVDEHTGRILVGRRYNEGIHQAIEAKEGVEVRAENQTLATVTLQNYFRLYKKLSGMTGTAETEAAEFMSTYKLGVVPIPTNKPMQRIDQDDLIYKNEKAKFDQVVEDIAKRHEKGQPVLVGTTSVEKSEYLSRLLAKKGVRHEVLNAKNHAREAAIVAQAGRLGSVTVATNMAGRGTDIMLGGNAEFIAVAEMNARGLSPVQTPEEYEAAWDQVFGVVKATVAGEAEEVIKAGGLYVLGTERHESRRIDNQLRGRSGRQGDPGESRFYLSLTDDLMRLFNAGAAESLMGRTSVPDDMAIESKVVSRAIRSAQSQVEARNAEIRKNVLKYDDVLNRQREAIYGDRRHILEGDDLHERVQTFLTEVVDDILDQHTGEGSGDDWDFDALWAELKTLYPVGVSIDEVIAEAGNKGRINRDFMRREILSDARIAYKSREESLGETAMRELERRVVLSVIDRRWRDHLYEMDYLKDGIGLRAMAQRDPLVEYQREGYAMFQQMMGAIREETIGFLFNLEVEVNQAPNGVESSAVAAKGLARGDSEARLSYSAPGERGEVEVRNQRGQIEQAATARAQQHSSAAVAAPEQGATQRGAFGQRVSAADDAAPANRAERRAQKKPTKRH.

ATP-binding positions include Q86, G104–T108, and D494. A disordered region spans residues E879–H935.

It belongs to the SecA family. As to quaternary structure, monomer and homodimer. Part of the essential Sec protein translocation apparatus which comprises SecA, SecYEG and auxiliary proteins SecDF. Other proteins may also be involved.

The protein localises to the cell membrane. Its subcellular location is the cytoplasm. The enzyme catalyses ATP + H2O + cellular proteinSide 1 = ADP + phosphate + cellular proteinSide 2.. Its function is as follows. Part of the Sec protein translocase complex. Interacts with the SecYEG preprotein conducting channel. Has a central role in coupling the hydrolysis of ATP to the transfer of proteins into and across the cell membrane, serving as an ATP-driven molecular motor driving the stepwise translocation of polypeptide chains across the membrane. This chain is Protein translocase subunit SecA, found in Leifsonia xyli subsp. xyli (strain CTCB07).